Reading from the N-terminus, the 590-residue chain is Putative sodium/calcium exchanger 6 (590 aa).

The signal sequence occupies residues 1-19 (MRIHFFAFLIILSLVGCDG). Helical transmembrane passes span 97 to 117 (IILI…VSSA), 139 to 159 (VAGV…GAIA), 173 to 193 (LGEL…VTIF), 208 to 228 (IAFY…YDHV), 230 to 250 (IWMP…VILS), 368 to 388 (PITL…IQVC), 397 to 417 (PGLW…VLFF), 440 to 460 (IAWI…LGVV), 499 to 519 (AAAI…PFTI), 535 to 555 (YRLL…AMFA), and 568 to 588 (LVFI…DILV).

It belongs to the Ca(2+):cation antiporter (CaCA) (TC 2.A.19) family.

Its subcellular location is the membrane. This chain is Putative sodium/calcium exchanger 6 (ncx-6), found in Caenorhabditis elegans.